The sequence spans 98 residues: MALTKAEMAEHLFETLGMNKRVAKEMVESFFEEIRGALESGEQVKLSGFGNFDLRDKNQRPGRNPKTGEDIPISARRVVTFRPGQKLKTRVEAANTGK.

Positions 49 to 70 (FGNFDLRDKNQRPGRNPKTGED) are disordered.

This sequence belongs to the bacterial histone-like protein family. Heterodimer of an alpha and a beta chain.

Its function is as follows. This protein is one of the two subunits of integration host factor, a specific DNA-binding protein that functions in genetic recombination as well as in transcriptional and translational control. This chain is Integration host factor subunit alpha, found in Shewanella baltica (strain OS223).